An 835-amino-acid polypeptide reads, in one-letter code: Leucine--tRNA ligase (835 aa).

Positions 36-46 match the 'HIGH' region motif; it reads PYPSGKIHVGH. Residues 602–606 carry the 'KMSKS' region motif; the sequence is KMSKS. Lysine 605 contributes to the ATP binding site.

Belongs to the class-I aminoacyl-tRNA synthetase family.

Its subcellular location is the cytoplasm. It catalyses the reaction tRNA(Leu) + L-leucine + ATP = L-leucyl-tRNA(Leu) + AMP + diphosphate. The polypeptide is Leucine--tRNA ligase (Rickettsia peacockii (strain Rustic)).